Here is a 115-residue protein sequence, read N- to C-terminus: Holo-[acyl-carrier-protein] synthase (115 aa).

Asp-6 and Glu-51 together coordinate Mg(2+).

The protein belongs to the P-Pant transferase superfamily. AcpS family. Mg(2+) is required as a cofactor.

It is found in the cytoplasm. The enzyme catalyses apo-[ACP] + CoA = holo-[ACP] + adenosine 3',5'-bisphosphate + H(+). Its function is as follows. Transfers the 4'-phosphopantetheine moiety from coenzyme A to a Ser of acyl-carrier-protein. This chain is Holo-[acyl-carrier-protein] synthase, found in Campylobacter jejuni subsp. jejuni serotype O:6 (strain 81116 / NCTC 11828).